Reading from the N-terminus, the 1405-residue chain is Xanthine dehydrogenase (1405 aa).

A 2Fe-2S ferredoxin-type domain is found at 17–104; that stretch reads NKLTFYVNGV…GKHLITVEGI (88 aa). Cysteine 56, cysteine 61, cysteine 64, cysteine 86, cysteine 125, cysteine 128, cysteine 161, and cysteine 163 together coordinate [2Fe-2S] cluster. Residues 288–474 enclose the FAD-binding PCMH-type domain; the sequence is FGNEQKVWFR…TKIFVPETVP (187 aa). FAD is bound by residues 316–323, phenylalanine 397, 407–411, aspartate 420, isoleucine 464, and lysine 483; these read IVGGASEI and TPAGN. Mo-molybdopterin contacts are provided by glutamine 833 and phenylalanine 864. Substrate contacts are provided by glutamate 868 and arginine 946. Arginine 978 is a binding site for Mo-molybdopterin. Residue phenylalanine 980 participates in substrate binding. Position 1147 (alanine 1147) interacts with Mo-molybdopterin. Glutamate 1333 serves as the catalytic Proton acceptor.

It belongs to the xanthine dehydrogenase family. Homodimer. Mo-molybdopterin serves as cofactor. [2Fe-2S] cluster is required as a cofactor. The cofactor is FAD.

The protein localises to the cytoplasm. It catalyses the reaction hypoxanthine + NAD(+) + H2O = xanthine + NADH + H(+). The catalysed reaction is xanthine + NAD(+) + H2O = urate + NADH + H(+). The protein operates within purine metabolism. Its activity is regulated as follows. Completely inhibited by allopurinol and significantly inhibited by adenine. Inhibited by Fe(2+), Cd(2+) and Zn(2+) and strongly inhibited by Cu(2+). Mg(2+) and Mo(2+) have no effect on activity. Its function is as follows. Key enzyme in purine degradation. Catalyzes the oxidation of hypoxanthine to xanthine. Catalyzes the oxidation of xanthine to uric acid. Oxidizes xanthine, hypoxanthine and pterine at high rates. Can also act on purine and guanine. The protein is Xanthine dehydrogenase of Blastobotrys adeninivorans (Yeast).